The following is a 291-amino-acid chain: MKIKEGYMPFHEYKTYYRIVGEPSADKAPLLIHGGPGSSHNYFELMDDYAETGRQLIMYDQVGCGKSSLPEDPGVYVKETWAEELVALRKFLHLDELHMLGQSWGGMLEMYYLTSFDPQGIKSVMIDGSPASIKLWVQEQHRLIKYLSYEDRAAIAEAERTGDFTNVKYLAANDRYMEKYCWDDPDENSPEPLRRPTNGKRASLIAEGPNEFTENGTISDFDVTDQLHKIHVPVLVTSGTDDLCTPLIAKSVVDHIPGAKWHLFANSRHLALLDQHDEFIHVLDQWLAAND.

The region spanning 30 to 274 (LLIHGGPGSS…ANSRHLALLD (245 aa)) is the AB hydrolase-1 domain. The active-site Nucleophile is the Ser-103. Residue Asp-242 is part of the active site. The active-site Proton donor is His-269.

It belongs to the peptidase S33 family.

Its subcellular location is the cell envelope. It carries out the reaction Release of N-terminal proline from a peptide.. Its function is as follows. Releases the N-terminal proline from various substrates. The chain is Proline iminopeptidase from Lacticaseibacillus rhamnosus (strain Lc 705) (Lactobacillus rhamnosus).